We begin with the raw amino-acid sequence, 165 residues long: Keratin-associated protein 5-7 (165 aa).

7 repeat units span residues 35-38, 41-44, 47-50, 116-119, 126-129, 145-148, and 155-158. A 7 X 4 AA repeats of C-C-X-P region spans residues 35-158; that stretch reads CCVPVCCCKP…CCSQSSCCVP (124 aa).

The protein belongs to the KRTAP type 5 family. In terms of assembly, interacts with hair keratins. Expressed in hair root but not in skin.

Its function is as follows. In the hair cortex, hair keratin intermediate filaments are embedded in an interfilamentous matrix, consisting of hair keratin-associated protein (KRTAP), which are essential for the formation of a rigid and resistant hair shaft through their extensive disulfide bond cross-linking with abundant cysteine residues of hair keratins. The matrix proteins include the high-sulfur and high-glycine-tyrosine keratins. This chain is Keratin-associated protein 5-7 (KRTAP5-7), found in Homo sapiens (Human).